Consider the following 351-residue polypeptide: Phosphoribosylformylglycinamidine cyclo-ligase (351 aa).

This sequence belongs to the AIR synthase family.

The protein localises to the cytoplasm. It catalyses the reaction 2-formamido-N(1)-(5-O-phospho-beta-D-ribosyl)acetamidine + ATP = 5-amino-1-(5-phospho-beta-D-ribosyl)imidazole + ADP + phosphate + H(+). It participates in purine metabolism; IMP biosynthesis via de novo pathway; 5-amino-1-(5-phospho-D-ribosyl)imidazole from N(2)-formyl-N(1)-(5-phospho-D-ribosyl)glycinamide: step 2/2. The protein is Phosphoribosylformylglycinamidine cyclo-ligase of Burkholderia vietnamiensis (strain G4 / LMG 22486) (Burkholderia cepacia (strain R1808)).